The sequence spans 92 residues: Kinetoplastid membrane protein 11 (92 aa).

R45 carries the post-translational modification Omega-N-methylarginine.

Belongs to the KMP-11 family. As to quaternary structure, monomer. A minor in vivo processed fragment (IVP) also exists, probably as a result of proteolysis. Post-translationally, probably O-glycosylated. Contains equimolar amounts of galactosamine, galactose, glucose and mannose. In terms of processing, the N-terminus is blocked.

It is found in the cytoplasm. Its subcellular location is the cytoskeleton. May be involved in the regulation of the cytoskeleton through interaction with the subpellicular microtubules. May be involved in parasite mobility and attachment to the surface of the host cell. Strongly stimulates T-cell proliferation and is thought to play a role in the immunology of leishmaniasis. This is Kinetoplastid membrane protein 11 (KMP-11) from Leishmania donovani.